Here is a 111-residue protein sequence, read N- to C-terminus: Nucleoid-associated protein Cpha266_1171 (111 aa).

This sequence belongs to the YbaB/EbfC family. In terms of assembly, homodimer.

It is found in the cytoplasm. The protein resides in the nucleoid. Binds to DNA and alters its conformation. May be involved in regulation of gene expression, nucleoid organization and DNA protection. The chain is Nucleoid-associated protein Cpha266_1171 from Chlorobium phaeobacteroides (strain DSM 266 / SMG 266 / 2430).